Reading from the N-terminus, the 323-residue chain is Melanocortin receptor 3 (323 aa).

Topologically, residues 1–37 are extracellular; sequence MNSSCCPSSSYPTLPNLSQHPAAPSASNRSGSGFCEQ. 3 N-linked (GlcNAc...) asparagine glycosylation sites follow: asparagine 2, asparagine 16, and asparagine 28. A helical transmembrane segment spans residues 38-63; that stretch reads VFIKPEVFLALGIVSLMENILVILAV. The Cytoplasmic portion of the chain corresponds to 64–75; the sequence is VRNGNLHSPMYF. A helical membrane pass occupies residues 76-100; it reads FLCSLAAADMLVSLSNSLETIMIVV. Over 101 to 118 the chain is Extracellular; the sequence is INSDSLTLEDQFIQHMDN. The helical transmembrane segment at 119–140 threads the bilayer; the sequence is IFDSMICISLVASICNLLAIAV. Residues 141 to 160 lie on the Cytoplasmic side of the membrane; sequence DRYVTIFYALRYHSIMTVRK. A helical transmembrane segment spans residues 161-181; the sequence is ALSLIVAIWVCCGICGVMFIV. Over 182 to 186 the chain is Extracellular; it reads YSESK. Residues 187 to 210 traverse the membrane as a helical segment; that stretch reads MVIVCLITMFFAMVLLMGTLYIHM. Over 211–245 the chain is Cytoplasmic; the sequence is FLFARLHVQRIAALPPADGVAPQQHSCMKGAVTIT. Residues 246–268 form a helical membrane-spanning segment; the sequence is ILLGVFIFCWAPFFLHLVLIITC. The Extracellular portion of the chain corresponds to 269 to 277; that stretch reads PTNPYCICY. The chain crosses the membrane as a helical span at residues 278–301; that stretch reads TAHFNTYLVLIMCNSVIDPLIYAF. The Cytoplasmic segment spans residues 302-323; sequence RSLELRNTFKEILCGCNGMNVG. A lipid anchor (S-palmitoyl cysteine) is attached at cysteine 315.

Belongs to the G-protein coupled receptor 1 family. In terms of tissue distribution, brain.

It is found in the cell membrane. Receptor for MSH (alpha, beta and gamma) and ACTH. This receptor is mediated by G proteins which activate adenylate cyclase. Required for expression of anticipatory patterns of activity and wakefulness during periods of limited nutrient availability and for the normal regulation of circadian clock activity in the brain. This is Melanocortin receptor 3 (Mc3r) from Rattus norvegicus (Rat).